Here is a 423-residue protein sequence, read N- to C-terminus: Haloacid dehalogenase-like hydrolase domain-containing 5 (423 aa).

The first 23 residues, 1–23 (MAAWGCVAALGAARGLCWRAARA), serve as a signal peptide directing secretion.

It belongs to the HAD-like hydrolase superfamily. As to expression, widely expressed.

This is Haloacid dehalogenase-like hydrolase domain-containing 5 from Homo sapiens (Human).